The following is a 434-amino-acid chain: Serine hydroxymethyltransferase (434 aa).

(6S)-5,6,7,8-tetrahydrofolate is bound by residues leucine 133 and 137–139 (GHL). Lysine 242 is modified (N6-(pyridoxal phosphate)lysine).

This sequence belongs to the SHMT family. Homodimer. It depends on pyridoxal 5'-phosphate as a cofactor.

It is found in the cytoplasm. The enzyme catalyses (6R)-5,10-methylene-5,6,7,8-tetrahydrofolate + glycine + H2O = (6S)-5,6,7,8-tetrahydrofolate + L-serine. It functions in the pathway one-carbon metabolism; tetrahydrofolate interconversion. The protein operates within amino-acid biosynthesis; glycine biosynthesis; glycine from L-serine: step 1/1. In terms of biological role, catalyzes the reversible interconversion of serine and glycine with tetrahydrofolate (THF) serving as the one-carbon carrier. This reaction serves as the major source of one-carbon groups required for the biosynthesis of purines, thymidylate, methionine, and other important biomolecules. Also exhibits THF-independent aldolase activity toward beta-hydroxyamino acids, producing glycine and aldehydes, via a retro-aldol mechanism. The chain is Serine hydroxymethyltransferase from Methylorubrum populi (strain ATCC BAA-705 / NCIMB 13946 / BJ001) (Methylobacterium populi).